Reading from the N-terminus, the 77-residue chain is Translation initiation factor IF-1, chloroplastic (77 aa).

One can recognise an S1-like domain in the interval 1 to 71 (MKRQKWIHEG…TRGRIIYRLR (71 aa)).

This sequence belongs to the IF-1 family. As to quaternary structure, component of the 30S ribosomal translation pre-initiation complex which assembles on the 30S ribosome in the order IF-2 and IF-3, IF-1 and N-formylmethionyl-tRNA(fMet); mRNA recruitment can occur at any time during PIC assembly.

It localises to the plastid. The protein localises to the chloroplast. One of the essential components for the initiation of protein synthesis. Stabilizes the binding of IF-2 and IF-3 on the 30S subunit to which N-formylmethionyl-tRNA(fMet) subsequently binds. Helps modulate mRNA selection, yielding the 30S pre-initiation complex (PIC). Upon addition of the 50S ribosomal subunit IF-1, IF-2 and IF-3 are released leaving the mature 70S translation initiation complex. The polypeptide is Translation initiation factor IF-1, chloroplastic (Leucophyllum frutescens (Texas ranger)).